The primary structure comprises 209 residues: Orotate phosphoribosyltransferase (209 aa).

5-phospho-alpha-D-ribose 1-diphosphate-binding positions include Arg-96, Lys-100, His-102, and 122–130; that span reads EDLISTGGS. Ser-126 contacts orotate.

The protein belongs to the purine/pyrimidine phosphoribosyltransferase family. PyrE subfamily. Homodimer. Requires Mg(2+) as cofactor.

It carries out the reaction orotidine 5'-phosphate + diphosphate = orotate + 5-phospho-alpha-D-ribose 1-diphosphate. It participates in pyrimidine metabolism; UMP biosynthesis via de novo pathway; UMP from orotate: step 1/2. Its function is as follows. Catalyzes the transfer of a ribosyl phosphate group from 5-phosphoribose 1-diphosphate to orotate, leading to the formation of orotidine monophosphate (OMP). This chain is Orotate phosphoribosyltransferase, found in Streptococcus mutans serotype c (strain ATCC 700610 / UA159).